Here is a 537-residue protein sequence, read N- to C-terminus: Copine-3 (537 aa).

C2 domains are found at residues 1 to 115 and 124 to 247; these read MAAQ…TRPL and GKGS…PVEF. The residue at position 14 (Ser-14) is a Phosphoserine. Asp-22, Asp-28, Asp-81, Asp-83, Asp-93, Asp-154, and Asp-160 together coordinate Ca(2+). The residue at position 197 (Ser-197) is a Phosphoserine. Residues Asp-216, Asp-218, and Asp-224 each coordinate Ca(2+). A Phosphoserine modification is found at Ser-243. Positions 291–513 constitute a VWFA domain; sequence NFTVGVDFTG…AQCVLAEIPQ (223 aa).

Belongs to the copine family. Monomer. Interacts with ERBB2 (preferentially with the tyrosine phosphorylated form); this interaction occurs at the cell membrane and is increased in a growth factor heregulin-dependent manner. Interacts with SHC1; this interaction may mediate the binding of CPNE3 with ERBB2. Interacts with RACK1. It depends on Ca(2+) as a cofactor. Phosphorylated on serine and threonine residues. Expressed in breast and weakly in prostate and ovarian tissues. Expressed in neutrophils (at protein level). Widely expressed. Expressed in the brain. Expressed in neutrophil precursors from the bone marrow and peripheral blood. Expressed in primary breast tumors and ovarian endometrioid adenocarcinoma.

The protein localises to the nucleus. It is found in the cytoplasm. Its subcellular location is the cell membrane. The protein resides in the cell junction. It localises to the focal adhesion. Its function is as follows. Calcium-dependent phospholipid-binding protein that plays a role in ERBB2-mediated tumor cell migration in response to growth factor heregulin stimulation. The polypeptide is Copine-3 (Homo sapiens (Human)).